A 968-amino-acid polypeptide reads, in one-letter code: Bifunctional glyoxylate cycle protein (968 aa).

The interval 1 to 443 (MSSAAKNFYQ…AVASQDEEIL (443 aa)) is isocitrate lyase. Positions 444–968 (SLTAQNVAGD…AYDRLVSEGY (525 aa)) are malate synthase. R601 functions as the Proton acceptor in the catalytic mechanism. D881 functions as the Proton donor in the catalytic mechanism.

It in the N-terminal section; belongs to the isocitrate lyase/PEP mutase superfamily. Isocitrate lyase family. The protein in the C-terminal section; belongs to the malate synthase family. Intestinal and body wall muscle cells.

It carries out the reaction D-threo-isocitrate = glyoxylate + succinate. The enzyme catalyses glyoxylate + acetyl-CoA + H2O = (S)-malate + CoA + H(+). It functions in the pathway carbohydrate metabolism; glyoxylate cycle; (S)-malate from isocitrate: step 1/2. It participates in carbohydrate metabolism; glyoxylate cycle; (S)-malate from isocitrate: step 2/2. The polypeptide is Bifunctional glyoxylate cycle protein (icl-1) (Caenorhabditis elegans).